Reading from the N-terminus, the 119-residue chain is Large ribosomal subunit protein uL18 (119 aa).

Belongs to the universal ribosomal protein uL18 family. As to quaternary structure, part of the 50S ribosomal subunit; part of the 5S rRNA/L5/L18/L25 subcomplex. Contacts the 5S and 23S rRNAs.

In terms of biological role, this is one of the proteins that bind and probably mediate the attachment of the 5S RNA into the large ribosomal subunit, where it forms part of the central protuberance. The polypeptide is Large ribosomal subunit protein uL18 (Borrelia duttonii (strain Ly)).